A 327-amino-acid chain; its full sequence is FERM domain-containing protein 6 (327 aa).

An FERM domain is found at 16–320; it reads RRVCIFLPND…NSHRLYMNLQ (305 aa).

The protein localises to the cytoplasm. The protein resides in the cell membrane. This is FERM domain-containing protein 6 (Frmd6) from Rattus norvegicus (Rat).